The chain runs to 182 residues: Histone deacetylase complex subunit SAP30L (182 aa).

Met-1 is subject to N-acetylmethionine. The span at 1-10 (MNGFSTEEDS) shows a compositional bias: acidic residues. The interval 1–22 (MNGFSTEEDSREGPPAAPAAAP) is disordered. 2 disulfides stabilise this stretch: Cys-28/Cys-29 and Cys-37/Cys-73. The Atypical zinc finger occupies 28–76 (CCLIADGERCVRPAGNASFSKRVQKSISQKKLKLDIDKSVRHLYICDFH). A Glycyl lysine isopeptide (Lys-Gly) (interchain with G-Cter in SUMO2) cross-link involves residue Lys-48. Positions 84–103 (RNKRKRKASDDGGDSPEHDA) are disordered. Positions 85–90 (NKRKRK) match the Nuclear localization signal (NLS) motif. The tract at residues 87–89 (RKR) is important for DNA and phosphoinositide binding. Residues Ser-92 and Ser-98 each carry the phosphoserine modification. Residues Lys-154, Lys-165, and Lys-174 each participate in a glycyl lysine isopeptide (Lys-Gly) (interchain with G-Cter in SUMO2) cross-link.

This sequence belongs to the SAP30 family. As to quaternary structure, interacts with components of the histone deacetylase complex SIN3A, HDAC1 and HDAC2. Binds histones and nucleosomes. Interacts with FEZ1.

The protein localises to the nucleus. The protein resides in the nucleolus. In terms of biological role, functions as a transcription repressor, probably via its interaction with histone deacetylase complexes. Involved in the functional recruitment of the class 1 Sin3-histone deacetylase complex (HDAC) to the nucleolus. Binds DNA, apparently without sequence-specificity, and bends bound double-stranded DNA. Binds phosphoinositol phosphates (phosphoinositol 3-phosphate, phosphoinositol 4-phosphate and phosphoinositol 5-phosphate) via the same basic sequence motif that mediates DNA binding and nuclear import. The chain is Histone deacetylase complex subunit SAP30L (Sap30l) from Mus musculus (Mouse).